A 127-amino-acid polypeptide reads, in one-letter code: Small ribosomal subunit protein eS8 (127 aa).

Residues 1 to 24 (MKWQGKSARKPTGGRLVPARGKRK) are disordered.

The protein belongs to the eukaryotic ribosomal protein eS8 family. As to quaternary structure, part of the 30S ribosomal subunit.

The protein is Small ribosomal subunit protein eS8 of Methanothrix thermoacetophila (strain DSM 6194 / JCM 14653 / NBRC 101360 / PT) (Methanosaeta thermophila).